The following is a 246-amino-acid chain: Transcription factor A, mitochondrial (246 aa).

The N-terminal 42 residues, 1 to 42 (MALLRGVWGVLSALGKSGADLCAVCGSRLRSPFSFAYVPRWF), are a transit peptide targeting the mitochondrion. Positions 50–118 (PKKPMTSYVR…VYKEEVNRIQ (69 aa)) form a DNA-binding region, HMG box 1. Phosphoserine; by PKA is present on residues serine 56 and serine 61. The residue at position 122 (threonine 122) is a Phosphothreonine. Positions 155–219 (PKRPRSAYNI…RYYNEMKSWE (65 aa)) form a DNA-binding region, HMG box 2. Serine 160 is modified (phosphoserine; by PKA). A phosphoserine mark is found at serine 193 and serine 195.

In terms of assembly, monomer; binds DNA as a monomer. Homodimer. Component of the mitochondrial transcription initiation complex, composed at least of TFB2M, TFAM and POLRMT. In this complex TFAM recruits POLRMT to the promoter whereas TFB2M induces structural changes in POLRMT to enable promoter opening and trapping of the DNA non-template strand. Upon metabolic stress, forms a complex composed of FOXO3, SIRT3, TFAM and POLRMT. Interacts with TFB1M and TFB2M. Interacts with CLPX; this enhances DNA-binding. Post-translationally, phosphorylation by PKA within the HMG box 1 impairs DNA binding and promotes degradation by the AAA+ Lon protease.

It is found in the mitochondrion. It localises to the mitochondrion matrix. Its subcellular location is the mitochondrion nucleoid. Functionally, binds to the mitochondrial light strand promoter and functions in mitochondrial transcription regulation. Component of the mitochondrial transcription initiation complex, composed at least of TFB2M, TFAM and POLRMT that is required for basal transcription of mitochondrial DNA. In this complex, TFAM recruits POLRMT to a specific promoter whereas TFB2M induces structural changes in POLRMT to enable promoter opening and trapping of the DNA non-template strand. Required for accurate and efficient promoter recognition by the mitochondrial RNA polymerase. Promotes transcription initiation from the HSP1 and the light strand promoter by binding immediately upstream of transcriptional start sites. Is able to unwind DNA. Bends the mitochondrial light strand promoter DNA into a U-turn shape via its HMG boxes. Required for maintenance of normal levels of mitochondrial DNA. May play a role in organizing and compacting mitochondrial DNA. The protein is Transcription factor A, mitochondrial of Sus scrofa (Pig).